The chain runs to 103 residues: Small ribosomal subunit protein uS10 (103 aa).

It belongs to the universal ribosomal protein uS10 family. In terms of assembly, part of the 30S ribosomal subunit.

Its function is as follows. Involved in the binding of tRNA to the ribosomes. This is Small ribosomal subunit protein uS10 from Stutzerimonas stutzeri (strain A1501) (Pseudomonas stutzeri).